The following is a 348-amino-acid chain: NADH-ubiquinone oxidoreductase chain 2 (348 aa).

A run of 9 helical transmembrane segments spans residues 13 to 33 (VITG…WAGL), 60 to 80 (FLAQ…NNLL), 96 to 116 (PLAM…HFWV), 124 to 144 (PLTS…SIMY), 150 to 170 (INTH…SWGG), 200 to 220 (TITT…FLTL), 241 to 261 (LMPL…LTGF), 278 to 298 (IIPT…MRLI), and 325 to 345 (LFIP…PLIL).

The protein belongs to the complex I subunit 2 family. Core subunit of respiratory chain NADH dehydrogenase (Complex I) which is composed of 45 different subunits. Interacts with TMEM242.

The protein resides in the mitochondrion inner membrane. It carries out the reaction a ubiquinone + NADH + 5 H(+)(in) = a ubiquinol + NAD(+) + 4 H(+)(out). Its function is as follows. Core subunit of the mitochondrial membrane respiratory chain NADH dehydrogenase (Complex I) which catalyzes electron transfer from NADH through the respiratory chain, using ubiquinone as an electron acceptor. Essential for the catalytic activity and assembly of complex I. This chain is NADH-ubiquinone oxidoreductase chain 2, found in Papio hamadryas (Hamadryas baboon).